The primary structure comprises 188 residues: Inosine triphosphate pyrophosphatase (188 aa).

Residue 7–12 (TGNAGK) participates in ITP binding. E36 provides a ligand contact to Mg(2+). ITP contacts are provided by residues K48, 64–65 (DT), K81, 140–143 (FGWN), K163, and 168–169 (HR).

The protein belongs to the HAM1 NTPase family. Homodimer. Mg(2+) serves as cofactor. Mn(2+) is required as a cofactor.

Its subcellular location is the cytoplasm. It localises to the nucleus. The catalysed reaction is ITP + H2O = IMP + diphosphate + H(+). It carries out the reaction dITP + H2O = dIMP + diphosphate + H(+). The enzyme catalyses XTP + H2O = XMP + diphosphate + H(+). Pyrophosphatase that hydrolyzes non-canonical purine nucleotides such as inosine triphosphate (ITP), deoxyinosine triphosphate (dITP) or xanthosine 5'-triphosphate (XTP) to their respective monophosphate derivatives. The enzyme does not distinguish between the deoxy- and ribose forms. Probably excludes non-canonical purines from RNA and DNA precursor pools, thus preventing their incorporation into RNA and DNA and avoiding chromosomal lesions. This chain is Inosine triphosphate pyrophosphatase, found in Yarrowia lipolytica (strain CLIB 122 / E 150) (Yeast).